Reading from the N-terminus, the 2437-residue chain is Neurogenic locus notch homolog protein 1 (2437 aa).

The signal sequence occupies residues 1 to 20 (MNRFLVKLTLLTAASLATVA). EGF-like domains are found at residues 21 to 57 (QGQRCSEYCQNGGICEYKPSGEASCRCPADFVGAQCQ), 58 to 98 (FPNP…RLCL), 101 to 138 (VNHACMNSPCRNGGTCSLLTLDTFTCRCQPGWSGKTCQ), and 139 to 175 (LADPCASNPCANGGQCSAFESHYICTCPPNFHGQTCR). Residues 21–1726 (QGQRCSEYCQ…GGPPKTGEMY (1706 aa)) are Extracellular-facing. 111 cysteine pairs are disulfide-bonded: cysteine 25–cysteine 35, cysteine 29–cysteine 45, cysteine 47–cysteine 56, cysteine 62–cysteine 73, cysteine 67–cysteine 86, cysteine 88–cysteine 97, cysteine 105–cysteine 116, cysteine 110–cysteine 126, cysteine 128–cysteine 137, cysteine 143–cysteine 154, cysteine 148–cysteine 163, cysteine 165–cysteine 174, cysteine 181–cysteine 194, cysteine 188–cysteine 203, cysteine 205–cysteine 214, cysteine 221–cysteine 232, cysteine 226–cysteine 242, cysteine 244–cysteine 253, cysteine 260–cysteine 271, cysteine 265–cysteine 280, cysteine 282–cysteine 291, cysteine 298–cysteine 311, cysteine 305–cysteine 320, cysteine 322–cysteine 331, cysteine 338–cysteine 349, cysteine 343–cysteine 358, cysteine 360–cysteine 369, cysteine 375–cysteine 386, cysteine 380–cysteine 397, cysteine 399–cysteine 408, cysteine 415–cysteine 428, cysteine 422–cysteine 437, cysteine 439–cysteine 448, cysteine 455–cysteine 466, cysteine 460–cysteine 475, cysteine 477–cysteine 486, cysteine 493–cysteine 503, cysteine 498–cysteine 512, cysteine 514–cysteine 523, cysteine 530–cysteine 541, cysteine 535–cysteine 550, cysteine 552–cysteine 561, cysteine 568–cysteine 578, cysteine 573–cysteine 587, cysteine 589–cysteine 598, cysteine 605–cysteine 616, cysteine 610–cysteine 625, cysteine 627–cysteine 636, cysteine 643–cysteine 653, cysteine 648–cysteine 662, cysteine 664–cysteine 673, cysteine 680–cysteine 691, cysteine 685–cysteine 700, cysteine 702–cysteine 711, cysteine 718–cysteine 728, cysteine 723–cysteine 737, cysteine 739–cysteine 748, cysteine 755–cysteine 766, cysteine 760–cysteine 775, cysteine 777–cysteine 786, cysteine 793–cysteine 804, cysteine 798–cysteine 813, cysteine 815–cysteine 824, cysteine 831–cysteine 842, cysteine 836–cysteine 853, cysteine 855–cysteine 864, cysteine 871–cysteine 882, cysteine 876–cysteine 891, cysteine 893–cysteine 902, cysteine 909–cysteine 920, cysteine 914–cysteine 929, cysteine 931–cysteine 940, cysteine 947–cysteine 958, cysteine 952–cysteine 967, cysteine 969–cysteine 978, cysteine 985–cysteine 996, cysteine 990–cysteine 1005, cysteine 1007–cysteine 1016, cysteine 1023–cysteine 1034, cysteine 1028–cysteine 1043, cysteine 1045–cysteine 1054, cysteine 1061–cysteine 1072, cysteine 1066–cysteine 1081, cysteine 1083–cysteine 1092, cysteine 1099–cysteine 1120, cysteine 1114–cysteine 1129, cysteine 1131–cysteine 1140, cysteine 1147–cysteine 1158, cysteine 1152–cysteine 1167, cysteine 1169–cysteine 1178, cysteine 1185–cysteine 1196, cysteine 1190–cysteine 1205, cysteine 1207–cysteine 1216, cysteine 1223–cysteine 1242, cysteine 1236–cysteine 1251, cysteine 1253–cysteine 1262, cysteine 1269–cysteine 1282, cysteine 1274–cysteine 1291, cysteine 1293–cysteine 1302, cysteine 1309–cysteine 1320, cysteine 1314–cysteine 1332, cysteine 1334–cysteine 1343, cysteine 1350–cysteine 1361, cysteine 1355–cysteine 1370, cysteine 1372–cysteine 1381, cysteine 1389–cysteine 1400, cysteine 1394–cysteine 1411, cysteine 1413–cysteine 1422, cysteine 1447–cysteine 1470, cysteine 1452–cysteine 1465, and cysteine 1461–cysteine 1477. The EGF-like 5; calcium-binding domain maps to 177–215 (DVNECAVSPSPCRNGGTCINEVGSYLCRCPPEYTGPHCQ). The EGF-like 6 domain occupies 217-254 (LYQPCLPSPCRSGGTCVQTSDTTHTCSCLPGFTGQTCE). Threonine 231 is a glycosylation site (O-linked (Fuc...) threonine; alternate). The O-linked (GalNAc...) threonine; alternate glycan is linked to threonine 231. In terms of domain architecture, EGF-like 7; calcium-binding spans 256 to 292 (NVDDCTQHACENGGPCIDGINTYNCHCDKHWTGQYCT). Positions 294-332 (DVDECELSPNACQNGGTCHNTIGGFHCVCVNGWTGDDCS) constitute an EGF-like 8; calcium-binding domain. An EGF-like 9; calcium-binding domain is found at 334 to 370 (NIDDCASAACSHGATCHDRVASFFCECPHGRTGLLCH). An EGF-like 10 domain is found at 371–409 (LDDACISNPCQKGSNCDTNPVSGKAICTCPPGYTGSACN). One can recognise an EGF-like 11; calcium-binding domain in the interval 411–449 (DIDECSLGANPCEHGGRCLNTKGSFQCKCLQGYEGPRCE). Residues 451-487 (DVNECKSNPCQNDATCLDQIGGFHCICMPGYEGVFCQ) enclose the EGF-like 12; calcium-binding domain. Positions 489-524 (NSDDCASQPCLNGKCIDKINSFHCECPKGFSGSLCQ) constitute an EGF-like 13; calcium-binding domain. In terms of domain architecture, EGF-like 14; calcium-binding spans 526–562 (DVDECASTPCKNGAKCTDGPNKYTCECTPGFSGIHCE). An EGF-like 15; calcium-binding domain is found at 564-599 (DINECASSPCHYGVCRDGVASFTCDCRPGYTGRLCE). The EGF-like 16; calcium-binding domain occupies 601 to 637 (NINECLSQPCRNGGTCQDRENAYICTCPKGTTGVNCE). The EGF-like 17; calcium-binding domain maps to 639–674 (NIDDCKRKPCDYGKCIDKINGYECVCEPGYSGSMCN). The EGF-like 18; calcium-binding domain occupies 676–712 (NIDDCALNPCHNGGTCIDGVNSFTCLCPDGFRDATCL). Positions 714 to 749 (QHNECSSNPCIHGSCLDQINSYRCVCEAGWMGRNCD) constitute an EGF-like 19; calcium-binding domain. The EGF-like 20; calcium-binding domain maps to 751-787 (NINECLSNPCVNGGTCKDMTSGYLCTCRAGFSGPNCQ). The 37-residue stretch at 789–825 (NINECASNPCLNQGSCIDDVAGFKCNCMLPYTGEVCE) folds into the EGF-like 21; calcium-binding domain. The EGF-like 22 domain maps to 827 to 865 (VLAPCSPRPCKNGGVCRESEDFQSFSCNCPAGWQGQTCE). The 37-residue stretch at 867–903 (DINECVRNPCTNGGVCENLRGGFQCRCNPGFTGALCE) folds into the EGF-like 23; calcium-binding domain. The region spanning 905 to 941 (DIDDCEPNPCSNGGVCQDRVNGFVCVCLAGFRGERCA) is the EGF-like 24; calcium-binding domain. The region spanning 943–979 (DIDECVSAPCRNGGNCTDCVNSYTCSCPAGFSGINCE) is the EGF-like 25; calcium-binding domain. N-linked (GlcNAc...) asparagine glycosylation is present at asparagine 957. One can recognise an EGF-like 26 domain in the interval 981 to 1017 (NTPDCTESSCFNGGTCVDGISSFSCVCLPGFTGNYCQ). Residues 1019–1055 (DVNECDSRPCQNGGSCQDGYGTYKCTCPHGYTGLNCQ) enclose the EGF-like 27; calcium-binding domain. EGF-like domains follow at residues 1057–1093 (LVRWCDSSPCKNGGSCWQQGASFTCQCASGWTGIYCD) and 1095–1141 (PSVS…SYCQ). The EGF-like 30; calcium-binding domain maps to 1143 to 1179 (QVDECQPNPCQNGATCTDYLGGYSCECVPGYHGMNCS). N-linked (GlcNAc...) asparagine glycosylation is present at asparagine 1177. The EGF-like 31; calcium-binding domain occupies 1181–1217 (EINECLSQPCQNGGTCIDLVNTYKCSCPRGTQGVHCE). Residues 1219–1263 (DIDDCSPSVDPLTGEPRCFNGGRCVDRVGGYGCVCPAGFVGERCE) form the EGF-like 32; calcium-binding domain. EGF-like domains lie at 1265 to 1303 (DVNECLSDPCDPSGSYNCVQLINDFRCECRTGYTGKRCE), 1305 to 1344 (VFNGCKDTPCKNGGTCAVASNTKHGYICKCQPGYSGSSCE), 1346 to 1382 (DSQSCGSLRCRNGATCVSGHLSPRCLCAPGFSGHECQ), and 1385 to 1423 (MDSPCLVNPCYNGGTCQPISDAPFYRCSCPANFNGLLCH). The O-linked (Fuc...) threonine; alternate glycan is linked to threonine 1399. O-linked (GalNAc...) threonine; alternate glycosylation occurs at threonine 1399. LNR repeat units lie at residues 1447 to 1487 (CEIA…PWQN), 1488 to 1525 (CSAALQCWRYFNDGKCDEQCATAGCLYDGFDCQRLEGQ), and 1526 to 1566 (CNPL…VPQK). N-linked (GlcNAc...) asparagine glycosylation is present at asparagine 1487. 6 disulfides stabilise this stretch: cysteine 1488-cysteine 1512, cysteine 1494-cysteine 1507, cysteine 1503-cysteine 1519, cysteine 1526-cysteine 1552, cysteine 1534-cysteine 1547, and cysteine 1543-cysteine 1559. An N-linked (GlcNAc...) asparagine glycan is attached at asparagine 1585. A helical membrane pass occupies residues 1727 to 1747 (PMFLVLLALAVLALAAVGVVV). Over 1748-2437 (SRKRKREHGQ…QMNHIPEAFK (690 aa)) the chain is Cytoplasmic. A disordered region spans residues 1770 to 1790 (KKKRREPVGEDSVGLKPLKNS). ANK repeat units follow at residues 1867-1910 (DGFT…NLHN), 1915-1944 (TGETALHLAARYARSDAAKRLLESCADANV), 1948-1978 (MGRTPLHAAVAADAQGVFQILIRNRATDLDA), 1982-2011 (DGTTPLILATRLAVEGMVEELINCHADPNA), 2015-2044 (SGKSALHWAAAVNNVDAAVVLLKNGANKDL), and 2048-2077 (KEETPLFLAAREGSYETAKVLLDHLANRDI). Disordered stretches follow at residues 2127-2174 (IKPS…GGIM) and 2356-2437 (RMAP…EAFK). Over residues 2356–2387 (RMAPPISSTQFLTPPSQHSYSNPMDNTPNHQQ) the composition is skewed to polar residues. Over residues 2396 to 2411 (PSAGSPDQWSSSSPHS) the composition is skewed to low complexity. A compositionally biased stretch (polar residues) spans 2412–2429 (NLSDWSEGISSPPTSMQM).

This sequence belongs to the NOTCH family. Synthesized in the endoplasmic reticulum as an inactive form which is proteolytically cleaved by a furin-like convertase in the trans-Golgi network before it reaches the plasma membrane to yield an active, ligand-accessible form. Cleavage results in a C-terminal fragment N(TM) and a N-terminal fragment N(EC). Following ligand binding, it is cleaved by adam17 to yield a membrane-associated intermediate fragment called notch extracellular truncation (NEXT). Following endocytosis, this fragment is then cleaved by presenilin dependent gamma-secretase to release a Notch-derived peptide containing the intracellular domain (NICD) from the membrane. In terms of processing, O-glycosylated on the EGF-like domains. Contains both O-linked fucose and O-linked glucose. O-linked glycosylation by galnt11 is involved in determination of left/right symmetry: glycosylation promotes activation of notch1, possibly by promoting cleavage by adam17, modulating the balance between motile and immotile (sensory) cilia at the left-right organiser (LRO).

It localises to the cell membrane. The protein resides in the nucleus. In terms of biological role, functions as a receptor for membrane-bound ligands Jagged-1 (JAG1), Jagged-2 (JAG2) and Delta-1 (DLL1) to regulate cell-fate determination. Upon ligand activation through the released notch intracellular domain (NICD) it forms a transcriptional activator complex with RBPJ/RBPSUH and activates genes of the enhancer of split locus. Affects the implementation of differentiation, proliferation and apoptotic programs. Involved in angiogenesis; negatively regulates endothelial cell proliferation and migration and angiogenic sprouting. Involved in the maturation of both CD4(+) and CD8(+) cells in the thymus. Important for follicular differentiation and possibly cell fate selection within the follicle. During cerebellar development, functions as a receptor for neuronal DNER and is involved in the differentiation of Bergmann glia. Represses neuronal and myogenic differentiation. May play an essential role in postimplantation development, probably in some aspect of cell specification and/or differentiation. May be involved in mesoderm development, somite formation and neurogenesis. Involved in determination of left/right symmetry by modulating the balance between motile and immotile (sensory) cilia at the left-right organiser (LRO). This chain is Neurogenic locus notch homolog protein 1 (notch1a), found in Danio rerio (Zebrafish).